Reading from the N-terminus, the 542-residue chain is CTP synthase (542 aa).

An amidoligase domain region spans residues 1-266 (MATNYIFVTG…DEFVCNRFHL (266 aa)). S14 serves as a coordination point for CTP. Residue S14 participates in UTP binding. Residues 15 to 20 (SLGKGI) and D72 contribute to the ATP site. Positions 72 and 140 each coordinate Mg(2+). Residues 147 to 149 (DIE), 187 to 192 (KTKPTQ), and K223 each bind CTP. Residues 187–192 (KTKPTQ) and K223 contribute to the UTP site. 239–241 (KDV) is an ATP binding site. A Glutamine amidotransferase type-1 domain is found at 291-542 (TIGMVGKYVE…VKAAKENQKK (252 aa)). G352 contacts L-glutamine. The active-site Nucleophile; for glutamine hydrolysis is C379. Residues 380 to 383 (LGMQ), E403, and R470 each bind L-glutamine. Catalysis depends on residues H515 and E517.

This sequence belongs to the CTP synthase family. As to quaternary structure, homotetramer.

It catalyses the reaction UTP + L-glutamine + ATP + H2O = CTP + L-glutamate + ADP + phosphate + 2 H(+). The enzyme catalyses L-glutamine + H2O = L-glutamate + NH4(+). The catalysed reaction is UTP + NH4(+) + ATP = CTP + ADP + phosphate + 2 H(+). The protein operates within pyrimidine metabolism; CTP biosynthesis via de novo pathway; CTP from UDP: step 2/2. Its activity is regulated as follows. Allosterically activated by GTP, when glutamine is the substrate; GTP has no effect on the reaction when ammonia is the substrate. The allosteric effector GTP functions by stabilizing the protein conformation that binds the tetrahedral intermediate(s) formed during glutamine hydrolysis. Inhibited by the product CTP, via allosteric rather than competitive inhibition. Catalyzes the ATP-dependent amination of UTP to CTP with either L-glutamine or ammonia as the source of nitrogen. Regulates intracellular CTP levels through interactions with the four ribonucleotide triphosphates. This is CTP synthase from Actinobacillus succinogenes (strain ATCC 55618 / DSM 22257 / CCUG 43843 / 130Z).